The chain runs to 284 residues: MIHNETIRWPAPAKLNLFLYITGQREDGYHELQTLFQFIDLCDYLTITPNLSGKITLTPNIEGLALENNLIYKAAMILKTHTAANNGAHITLEKNLPMGGGLGGGSSDAATTLVALNHQWNINLTKDKLAEIGVLLGADVPVFIFGKAAIAEGIGEKLTPAYPAERSYLIAVPDCHISTAAVFQAKNLIRNTKKRTHLQLINQNWLNDCQPYVKKNYPKVAKVIEWLIEYAPTQLTGTGACVFSTFNSINEAEIVLHNTPDWLAALTAKGLNNSPLNELLATLK.

Residue lysine 14 is part of the active site. Position 97 to 107 (97 to 107) interacts with ATP; sequence PMGGGLGGGSS. Residue aspartate 139 is part of the active site.

It belongs to the GHMP kinase family. IspE subfamily.

It catalyses the reaction 4-CDP-2-C-methyl-D-erythritol + ATP = 4-CDP-2-C-methyl-D-erythritol 2-phosphate + ADP + H(+). Its pathway is isoprenoid biosynthesis; isopentenyl diphosphate biosynthesis via DXP pathway; isopentenyl diphosphate from 1-deoxy-D-xylulose 5-phosphate: step 3/6. Its function is as follows. Catalyzes the phosphorylation of the position 2 hydroxy group of 4-diphosphocytidyl-2C-methyl-D-erythritol. This chain is 4-diphosphocytidyl-2-C-methyl-D-erythritol kinase, found in Psychromonas ingrahamii (strain DSM 17664 / CCUG 51855 / 37).